A 346-amino-acid chain; its full sequence is UDP-3-O-acylglucosamine N-acyltransferase (346 aa).

Residue His240 is the Proton acceptor of the active site.

The protein belongs to the transferase hexapeptide repeat family. LpxD subfamily. In terms of assembly, homotrimer.

It catalyses the reaction a UDP-3-O-[(3R)-3-hydroxyacyl]-alpha-D-glucosamine + a (3R)-hydroxyacyl-[ACP] = a UDP-2-N,3-O-bis[(3R)-3-hydroxyacyl]-alpha-D-glucosamine + holo-[ACP] + H(+). It functions in the pathway bacterial outer membrane biogenesis; LPS lipid A biosynthesis. Its function is as follows. Catalyzes the N-acylation of UDP-3-O-acylglucosamine using 3-hydroxyacyl-ACP as the acyl donor. Is involved in the biosynthesis of lipid A, a phosphorylated glycolipid that anchors the lipopolysaccharide to the outer membrane of the cell. The protein is UDP-3-O-acylglucosamine N-acyltransferase of Bacteroides fragilis (strain ATCC 25285 / DSM 2151 / CCUG 4856 / JCM 11019 / LMG 10263 / NCTC 9343 / Onslow / VPI 2553 / EN-2).